Consider the following 417-residue polypeptide: NADH-quinone oxidoreductase subunit D (417 aa).

The protein belongs to the complex I 49 kDa subunit family. As to quaternary structure, NDH-1 is composed of 14 different subunits. Subunits NuoB, C, D, E, F, and G constitute the peripheral sector of the complex.

It is found in the cell inner membrane. The enzyme catalyses a quinone + NADH + 5 H(+)(in) = a quinol + NAD(+) + 4 H(+)(out). Its function is as follows. NDH-1 shuttles electrons from NADH, via FMN and iron-sulfur (Fe-S) centers, to quinones in the respiratory chain. The immediate electron acceptor for the enzyme in this species is believed to be ubiquinone. Couples the redox reaction to proton translocation (for every two electrons transferred, four hydrogen ions are translocated across the cytoplasmic membrane), and thus conserves the redox energy in a proton gradient. The sequence is that of NADH-quinone oxidoreductase subunit D from Ruthia magnifica subsp. Calyptogena magnifica.